Here is a 490-residue protein sequence, read N- to C-terminus: CUGBP Elav-like family member 1 (490 aa).

RRM domains lie at Ile-16–Ser-99 and Arg-108–Thr-188. Residues Pro-283 to Ser-312 form a disordered region. The region spanning Ala-405 to Ser-483 is the RRM 3 domain.

Belongs to the CELF/BRUNOL family. Oligomer. Oligomerization is required for RNA-binding and EDEN-dependent deadenylation. Post-translationally, phosphorylated during oocyte maturation and dephosphorylated following egg activation. Dephosphorylation is calcium dependent and correlates with the increase in the activity of EDEN-dependent deadenylation.

It localises to the nucleus. Its subcellular location is the cytoplasm. RNA-binding protein implicated in the regulation of several post-transcriptional events. May be involved in pre-mRNA alternative splicing, mRNA translation activation and stability. Mediates the rapid and sequence-specific cytoplasmic deadenylation of EDEN-containing maternal mRNAs following fertilization. Binds to AU-rich sequences (AREs) of jun mRNA. Binds to the embryonic deadenylation element (EDEN) motif localized in the 3'-UTR of maternal mRNAs. Binds to RNA containing several repeats of the consensus sequence 5'-UGU-3'. EDEN-dependent deadenylation is enhanced by the presence of an additional cis element composed of three AUU repeats. The polypeptide is CUGBP Elav-like family member 1 (celf1) (Xenopus tropicalis (Western clawed frog)).